Reading from the N-terminus, the 538-residue chain is Non-specific phospholipase C4 (538 aa).

The interval 91–112 (KPWDSGKPDPNPGHPNMSGFAQ) is disordered.

It belongs to the bacterial phospholipase C family. Expressed in root tips, cotyledons, on leaf margins, stems, young anthers and funiculus.

The protein resides in the cell membrane. It catalyses the reaction a 1,2-diacyl-sn-glycero-3-phosphocholine + H2O = phosphocholine + a 1,2-diacyl-sn-glycerol + H(+). In terms of biological role, non-specific phospholipase C (PLC) which assumes major PLC activity during inorganic phosphate starvation. Substrate preference is phosphatidylcholine (PC), but can also hydrolyze phosphatidylethanolamine (PE) with lower efficiency. Has no activity toward phosphatidic acid (PA). Plays an important role in the supply of both inorganic phosphate and diacylglycerol from membrane-localized phospholipids during phosphate deprivation. May be required for lipid-derived signaling molecules that positively modulate abscisic acid (ABA) response and promote plant tolerance to drought and salt stresses. May be involved in brassinolide-mediated signaling in root development. The polypeptide is Non-specific phospholipase C4 (NPC4) (Arabidopsis thaliana (Mouse-ear cress)).